The sequence spans 71 residues: Conotoxin Lt11.3 (71 aa).

The first 26 residues, 1–26 (MMFRLTSVGCILLVIAFLNLVGLTNA), serve as a signal peptide directing secretion. 4 cysteine pairs are disulfide-bonded: C27-C41, C34-C46, C40-C50, and C45-C54. At P57 the chain carries Proline amide. The propeptide occupies 61 to 71 (TRLQGFFKHRR).

It belongs to the conotoxin I2 superfamily. As to expression, expressed by the venom duct.

The protein localises to the secreted. In terms of biological role, probable neurotoxin. This chain is Conotoxin Lt11.3, found in Conus litteratus (Lettered cone).